We begin with the raw amino-acid sequence, 701 residues long: Putative pectinesterase/pectinesterase inhibitor 43 (701 aa).

The first 22 residues, 1-22, serve as a signal peptide directing secretion; that stretch reads MNKYVLLGVTALIMAMVICVEA. Positions 42-195 are pectinesterase inhibitor 43; the sequence is MITKTTVSII…QHLTSNGLAI (154 aa). Composition is skewed to low complexity over residues 221–256 and 263–275; these read GILGSGSSRDESVGSSQDSPPNEDSSDDSPSTVDSS and SSSENQSSDSSNN. The tract at residues 221–351 is disordered; it reads GILGSGSSRD…DPLRKLNPLN (131 aa). The N-linked (GlcNAc...) asparagine glycan is linked to N267. Polar residues-rich tracts occupy residues 276–287 and 313–338; these read RPLDSSKNQQME and QKSTSSENQPLDSSENPPQKSTSSEN. The segment at 391–688 is pectinesterase 43; sequence NVVVAKDGSG…FAPGNFLRGN (298 aa). Substrate-binding residues include T467 and Q497. D520 acts as the Proton donor; for pectinesterase activity in catalysis. C534 and C554 form a disulfide bridge. Catalysis depends on D541, which acts as the Nucleophile; for pectinesterase activity. Substrate is bound by residues R609 and W611. N-linked (GlcNAc...) asparagine glycosylation is present at N637.

This sequence in the N-terminal section; belongs to the PMEI family. It in the C-terminal section; belongs to the pectinesterase family. As to expression, expressed in flower buds.

It localises to the secreted. Its subcellular location is the cell wall. The catalysed reaction is [(1-&gt;4)-alpha-D-galacturonosyl methyl ester](n) + n H2O = [(1-&gt;4)-alpha-D-galacturonosyl](n) + n methanol + n H(+). Its pathway is glycan metabolism; pectin degradation; 2-dehydro-3-deoxy-D-gluconate from pectin: step 1/5. Acts in the modification of cell walls via demethylesterification of cell wall pectin. This is Putative pectinesterase/pectinesterase inhibitor 43 (PME43) from Arabidopsis thaliana (Mouse-ear cress).